Consider the following 1118-residue polypeptide: Protein argonaute 1B (1118 aa).

Disordered regions lie at residues 1–175 (MALQ…SRTV) and 188–246 (APMV…RFPL). Basic residues predominate over residues 10–24 (PHHHQVPIMVKKKRT). The segment covering 25–35 (GSGSTGESSGE) has biased composition (low complexity). 3 stretches are compositionally biased toward gly residues: residues 54 to 92 (QHGG…HHPG), 100 to 110 (GRGGPGSHHPG), and 118 to 128 (GRGGSGSHHPG). 2 stretches are compositionally biased toward low complexity: residues 148-157 (RGGMPQPYYG) and 193-219 (PTPS…QFQQ). The span at 220-241 (LATRDQSSTSQAIQIAPPSSKS) shows a compositional bias: polar residues. The region spanning 457–570 (PVIDFVAQLL…LPMEVCKIVE (114 aa)) is the PAZ domain. The region spanning 746-1067 (LLIVILPDNN…AAFRARFYME (322 aa)) is the Piwi domain.

It belongs to the argonaute family. Ago subfamily.

Probably involved in the RNA silencing pathway. May bind to short RNAs such as microRNAs (miRNAs) or short interfering RNAs (siRNAs), and represses the translation of mRNAs which are complementary to them. This is Protein argonaute 1B (AGO1B) from Oryza sativa subsp. japonica (Rice).